A 379-amino-acid polypeptide reads, in one-letter code: UDP-4-amino-4-deoxy-L-arabinose--oxoglutarate aminotransferase (379 aa).

Position 182 is an N6-(pyridoxal phosphate)lysine (lysine 182).

Belongs to the DegT/DnrJ/EryC1 family. ArnB subfamily. As to quaternary structure, homodimer. Requires pyridoxal 5'-phosphate as cofactor.

It catalyses the reaction UDP-4-amino-4-deoxy-beta-L-arabinose + 2-oxoglutarate = UDP-beta-L-threo-pentopyranos-4-ulose + L-glutamate. Its pathway is nucleotide-sugar biosynthesis; UDP-4-deoxy-4-formamido-beta-L-arabinose biosynthesis; UDP-4-deoxy-4-formamido-beta-L-arabinose from UDP-alpha-D-glucuronate: step 2/3. It functions in the pathway bacterial outer membrane biogenesis; lipopolysaccharide biosynthesis. In terms of biological role, catalyzes the conversion of UDP-4-keto-arabinose (UDP-Ara4O) to UDP-4-amino-4-deoxy-L-arabinose (UDP-L-Ara4N). The modified arabinose is attached to lipid A and is required for resistance to polymyxin and cationic antimicrobial peptides. The sequence is that of UDP-4-amino-4-deoxy-L-arabinose--oxoglutarate aminotransferase from Sodalis glossinidius (strain morsitans).